The chain runs to 457 residues: V-type ATP synthase beta chain (457 aa).

This sequence belongs to the ATPase alpha/beta chains family.

Produces ATP from ADP in the presence of a proton gradient across the membrane. The V-type beta chain is a regulatory subunit. The polypeptide is V-type ATP synthase beta chain (Clostridioides difficile (strain 630) (Peptoclostridium difficile)).